A 572-amino-acid polypeptide reads, in one-letter code: Probable cysteine--tRNA ligase, mitochondrial (572 aa).

A Zn(2+)-binding site is contributed by Cys81. Gly82 serves as a coordination point for L-cysteine. Residues 83-93 carry the 'HIGH' region motif; it reads PTVYDHAHLGH. L-cysteine is bound at residue Thr122. A 'KIIK' region motif is present at residues 127 to 130; the sequence is KIIK. Cys260, His285, and Glu289 together coordinate Zn(2+). His285 provides a ligand contact to L-cysteine. The short motif at 320-324 is the 'KMSKS' region element; the sequence is KMSKS. Lys323 contacts ATP.

This sequence belongs to the class-I aminoacyl-tRNA synthetase family. It depends on Zn(2+) as a cofactor.

The protein resides in the mitochondrion. The catalysed reaction is tRNA(Cys) + L-cysteine + ATP = L-cysteinyl-tRNA(Cys) + AMP + diphosphate. The enzyme catalyses 2 L-cysteine = S-sulfanyl-L-cysteine + L-alanine. It carries out the reaction S-sulfanyl-L-cysteine + L-cysteine = S-disulfanyl-L-cysteine + L-alanine. It catalyses the reaction S-sulfanyl-L-cysteine + tRNA(Cys) + ATP = (S)-sulfanyl-L-cysteinyl-tRNA(Cys) + AMP + diphosphate. The catalysed reaction is S-disulfanyl-L-cysteine + tRNA(Cys) + ATP = (S)-disulfanyl-L-cysteinyl-tRNA(Cys) + AMP + diphosphate. Its function is as follows. Mitochondrial cysteine-specific aminoacyl-tRNA synthetase that catalyzes the ATP-dependent ligation of cysteine to tRNA(Cys). Functionally, in addition to its role as an aminoacyl-tRNA synthetase, has also cysteine persulfide synthase activity. Produces reactive persulfide species such as cysteine persulfide (CysSSH) from substrate cysteine and mediate direct incorporation of CysSSH into proteins during translations, resulting in protein persulfides and polysulfides. CysSSHs behave as potent antioxidants and cellular protectants. The sequence is that of Probable cysteine--tRNA ligase, mitochondrial (cars2) from Xenopus tropicalis (Western clawed frog).